The primary structure comprises 145 residues: Photosystem I reaction center subunit XI (145 aa).

A run of 3 helical transmembrane segments spans residues 48-68 (LEIG…LGPL), 75-95 (LLVG…GLTI), and 125-145 (IGAF…SFFA).

This sequence belongs to the PsaL family.

The protein localises to the plastid. It is found in the chloroplast thylakoid membrane. This chain is Photosystem I reaction center subunit XI, found in Emiliania huxleyi (Coccolithophore).